We begin with the raw amino-acid sequence, 378 residues long: MKFVDEATIEVIAGKGGNGVASFRREKFIPKGGPDGGDGGRGGSIYAVADRNINTLIDFRYARLHRAKNGENGRGSDQYGAAAPDITLRVPVGTVVHDADTGELLFDLNRHGEKVTLAAGGQGGMGNLHFKSSTNRAPRQWTPGKEGEQRRLRLELKVLADVGLLGLPNAGKSTLISRISNARPKVADYPFTTLHPNLGVVRTSASRSFVVADIPGLIEGASEGAGLGHLFLRHLARTRVLLHLVDISSPDPDTDPIEQAVADARAIVEELRRYDPELADKPRWLVLNKLDMVADPDAARQRFVEQFSWQGPVFVISGLNGDGTQELIWALQDYLDAEQRKANLAQDQADGTYVAEDPRFDATRSDAAPPGAPRGGDE.

Residues 1-159 (MKFVDEATIE…RRLRLELKVL (159 aa)) enclose the Obg domain. The region spanning 160-336 (ADVGLLGLPN…LIWALQDYLD (177 aa)) is the OBG-type G domain. GTP-binding positions include 166 to 173 (GLPNAGKS), 191 to 195 (FTTLH), 213 to 216 (DIPG), 288 to 291 (NKLD), and 317 to 319 (SGL). Mg(2+) is bound by residues serine 173 and threonine 193. Residues 345-378 (AQDQADGTYVAEDPRFDATRSDAAPPGAPRGGDE) are disordered.

This sequence belongs to the TRAFAC class OBG-HflX-like GTPase superfamily. OBG GTPase family. Monomer. It depends on Mg(2+) as a cofactor.

The protein localises to the cytoplasm. Functionally, an essential GTPase which binds GTP, GDP and possibly (p)ppGpp with moderate affinity, with high nucleotide exchange rates and a fairly low GTP hydrolysis rate. Plays a role in control of the cell cycle, stress response, ribosome biogenesis and in those bacteria that undergo differentiation, in morphogenesis control. This Bordetella petrii (strain ATCC BAA-461 / DSM 12804 / CCUG 43448) protein is GTPase Obg.